The following is a 95-amino-acid chain: Cell division topological specificity factor (95 aa).

Belongs to the MinE family.

Functionally, prevents the cell division inhibition by proteins MinC and MinD at internal division sites while permitting inhibition at polar sites. This ensures cell division at the proper site by restricting the formation of a division septum at the midpoint of the long axis of the cell. The chain is Cell division topological specificity factor from Trichodesmium erythraeum (strain IMS101).